The primary structure comprises 574 residues: Choline transporter-like protein ctl1 (574 aa).

Asn-40 and Asn-101 each carry an N-linked (GlcNAc...) asparagine glycan. Transmembrane regions (helical) follow at residues 144–164 (WGLT…LMVW), 189–209 (KDAI…VAIP), 211–231 (FLYF…VYLL), 246–266 (LMLL…YYVW), 291–311 (QITL…FIWV), 336–356 (WVLA…FHAL), 396–416 (YGLC…LHFL), and 434–456 (TSAS…VPYM). Residue Asn-457 is glycosylated (N-linked (GlcNAc...) asparagine). 2 consecutive transmembrane segments (helical) span residues 485 to 505 (LLAA…NYSI) and 511 to 531 (FYGY…IGAI). Asn-558 carries an N-linked (GlcNAc...) asparagine glycan.

This sequence belongs to the CTL (choline transporter-like) family. As to quaternary structure, interacts with atg9.

Its subcellular location is the endoplasmic reticulum membrane. It localises to the preautophagosomal structure membrane. Functionally, required for the normal organization of the preautophagosomal structure (PAS) and for the correct subcellular location of atg9. This is Choline transporter-like protein ctl1 (ctl1) from Schizosaccharomyces pombe (strain 972 / ATCC 24843) (Fission yeast).